Here is a 339-residue protein sequence, read N- to C-terminus: 2,3,4,5-tetrahydropyridine-2,6-dicarboxylate N-succinyltransferase (339 aa).

D180 is a Mg(2+) binding site. Catalysis depends on E213, which acts as the Acyl-anhydride intermediate. Succinyl-CoA-binding positions include R215, G230, S233, A256, 271 to 272, G279, and K300; that span reads EA.

It belongs to the type 2 tetrahydrodipicolinate N-succinyltransferase family. Homotrimer.

It localises to the cytoplasm. The catalysed reaction is (S)-2,3,4,5-tetrahydrodipicolinate + succinyl-CoA + H2O = (S)-2-succinylamino-6-oxoheptanedioate + CoA. The protein operates within amino-acid biosynthesis; L-lysine biosynthesis via DAP pathway; LL-2,6-diaminopimelate from (S)-tetrahydrodipicolinate (succinylase route): step 1/3. Its function is as follows. Catalyzes the conversion of the cyclic tetrahydrodipicolinate (THDP) into the acyclic N-succinyl-L-2-amino-6-oxopimelate using succinyl-CoA. This Bifidobacterium longum (strain NCC 2705) protein is 2,3,4,5-tetrahydropyridine-2,6-dicarboxylate N-succinyltransferase.